Consider the following 475-residue polypeptide: MKITLPEFEKARVLVVGDVMLDRYWHGPTGRISPEAPVPVVKVEHIEERPGGAANVALNSAALGAHAVLLGLTGQDEAADALAGQMAGVKVACDFVRLADYPTITKLRVLSRNQQLLRLDFEEAFHDVDSTLLMGKVEQALPHSDVMILSDYGKGALNDVPSMIQRARAAGIPVLVDPKGTDFEKYRGATLLTPNMSEFEAVVGKVKSEEELVAKGLELVKRFELEALLVTRSENGMTLIREGQPELHLPAQAHEVYDVTGAGDTVISTLATSLAAGKSLDEACALANTAAGIVVGKLGTSTVSPVELANALYTEQETGFGVMSEAQLKIAVQAARLRGEKVVMTNGCFDILHAGHVSYLANAGKLGDRLIVAVNTDESVRRLKGPGRPVNPTERRMAVLAALGAVDWVVPFAEDTPQRLIAEVLPDLLVKGGDYKPEEIAGYAEVTANGGEVRVLNFEDGCSTSDIIKTIRERG.

The interval 1–318 (MKITLPEFEK…ANALYTEQET (318 aa)) is ribokinase. 195–198 (NMSE) contacts ATP. The active site involves Asp264. Positions 344-475 (MTNGCFDILH…DIIKTIRERG (132 aa)) are cytidylyltransferase.

This sequence in the N-terminal section; belongs to the carbohydrate kinase PfkB family. In the C-terminal section; belongs to the cytidylyltransferase family. Homodimer.

It carries out the reaction D-glycero-beta-D-manno-heptose 7-phosphate + ATP = D-glycero-beta-D-manno-heptose 1,7-bisphosphate + ADP + H(+). The catalysed reaction is D-glycero-beta-D-manno-heptose 1-phosphate + ATP + H(+) = ADP-D-glycero-beta-D-manno-heptose + diphosphate. The protein operates within nucleotide-sugar biosynthesis; ADP-L-glycero-beta-D-manno-heptose biosynthesis; ADP-L-glycero-beta-D-manno-heptose from D-glycero-beta-D-manno-heptose 7-phosphate: step 1/4. It participates in nucleotide-sugar biosynthesis; ADP-L-glycero-beta-D-manno-heptose biosynthesis; ADP-L-glycero-beta-D-manno-heptose from D-glycero-beta-D-manno-heptose 7-phosphate: step 3/4. In terms of biological role, catalyzes the phosphorylation of D-glycero-D-manno-heptose 7-phosphate at the C-1 position to selectively form D-glycero-beta-D-manno-heptose-1,7-bisphosphate. Its function is as follows. Catalyzes the ADP transfer from ATP to D-glycero-beta-D-manno-heptose 1-phosphate, yielding ADP-D-glycero-beta-D-manno-heptose. This is Bifunctional protein HldE from Aeromonas hydrophila subsp. hydrophila (strain ATCC 7966 / DSM 30187 / BCRC 13018 / CCUG 14551 / JCM 1027 / KCTC 2358 / NCIMB 9240 / NCTC 8049).